Consider the following 197-residue polypeptide: Large ribosomal subunit protein bL25 (197 aa).

The protein belongs to the bacterial ribosomal protein bL25 family. CTC subfamily. In terms of assembly, part of the 50S ribosomal subunit; part of the 5S rRNA/L5/L18/L25 subcomplex. Contacts the 5S rRNA. Binds to the 5S rRNA independently of L5 and L18.

In terms of biological role, this is one of the proteins that binds to the 5S RNA in the ribosome where it forms part of the central protuberance. In Hydrogenobaculum sp. (strain Y04AAS1), this protein is Large ribosomal subunit protein bL25.